A 235-amino-acid polypeptide reads, in one-letter code: U1 small nuclear ribonucleoprotein C (235 aa).

The Matrin-type zinc finger occupies 4 to 36; sequence YYCEYCDIYLTHSSPVGRRQHIHGRKHISAKIE. The segment at 131 to 235 is disordered; sequence QAHNNYSYPN…SKEHIESDIS (105 aa). Low complexity predominate over residues 134–168; it reads NNYSYPNSINPSNQINYSNNYGSNNFNNSNEFNKN. Basic and acidic residues predominate over residues 169-189; the sequence is MNEKDNINNNDIHDNKVKTDE. A compositionally biased stretch (low complexity) spans 192 to 203; that stretch reads PINNDNLNNTRN. Composition is skewed to basic and acidic residues over residues 205 to 217 and 225 to 235; these read SYEENHYSTDHKK and NSKEHIESDIS.

The protein belongs to the U1 small nuclear ribonucleoprotein C family. As to quaternary structure, U1 snRNP is composed of the 7 core Sm proteins B/B', D1, D2, D3, E, F and G that assemble in a heptameric protein ring on the Sm site of the small nuclear RNA to form the core snRNP, and at least 3 U1 snRNP-specific proteins U1-70K, U1-A and U1-C. U1-C interacts with U1 snRNA and the 5' splice-site region of the pre-mRNA.

It is found in the nucleus. In terms of biological role, component of the spliceosomal U1 snRNP, which is essential for recognition of the pre-mRNA 5' splice-site and the subsequent assembly of the spliceosome. U1-C is directly involved in initial 5' splice-site recognition for both constitutive and regulated alternative splicing. The interaction with the 5' splice-site seems to precede base-pairing between the pre-mRNA and the U1 snRNA. Stimulates commitment or early (E) complex formation by stabilizing the base pairing of the 5' end of the U1 snRNA and the 5' splice-site region. The polypeptide is U1 small nuclear ribonucleoprotein C (Plasmodium falciparum (isolate 3D7)).